The sequence spans 216 residues: MRPTPDLRCYFITGHGSHEHIVDVARRAVAGGARTVQVRSKPITARELYALTEAVALAVGETAHVLVDDRVDIALALRHRGLPVHGVHVGQDDLPVRDVRALLGEEAIIGLTTGTRELVEAANEHAEVLDYIGAGPFRPTPTKDSGRPPLGVEGYRELVELSRLPVVAIGDVTADDAPALADTGVAGLAVVRGLMESADPTGYARRLITGFGEGRQ.

4-amino-2-methyl-5-(diphosphooxymethyl)pyrimidine contacts are provided by residues 37–41 (QVRSK) and Asp68. The Mg(2+) site is built by Asp69 and Asp93. Residue Thr112 coordinates 4-amino-2-methyl-5-(diphosphooxymethyl)pyrimidine. 140 to 142 (TPT) contributes to the 2-[(2R,5Z)-2-carboxy-4-methylthiazol-5(2H)-ylidene]ethyl phosphate binding site. Lys143 is a binding site for 4-amino-2-methyl-5-(diphosphooxymethyl)pyrimidine.

This sequence belongs to the thiamine-phosphate synthase family. Requires Mg(2+) as cofactor.

The catalysed reaction is 2-[(2R,5Z)-2-carboxy-4-methylthiazol-5(2H)-ylidene]ethyl phosphate + 4-amino-2-methyl-5-(diphosphooxymethyl)pyrimidine + 2 H(+) = thiamine phosphate + CO2 + diphosphate. It catalyses the reaction 2-(2-carboxy-4-methylthiazol-5-yl)ethyl phosphate + 4-amino-2-methyl-5-(diphosphooxymethyl)pyrimidine + 2 H(+) = thiamine phosphate + CO2 + diphosphate. It carries out the reaction 4-methyl-5-(2-phosphooxyethyl)-thiazole + 4-amino-2-methyl-5-(diphosphooxymethyl)pyrimidine + H(+) = thiamine phosphate + diphosphate. The protein operates within cofactor biosynthesis; thiamine diphosphate biosynthesis; thiamine phosphate from 4-amino-2-methyl-5-diphosphomethylpyrimidine and 4-methyl-5-(2-phosphoethyl)-thiazole: step 1/1. Functionally, condenses 4-methyl-5-(beta-hydroxyethyl)thiazole monophosphate (THZ-P) and 2-methyl-4-amino-5-hydroxymethyl pyrimidine pyrophosphate (HMP-PP) to form thiamine monophosphate (TMP). The sequence is that of Thiamine-phosphate synthase from Corynebacterium efficiens (strain DSM 44549 / YS-314 / AJ 12310 / JCM 11189 / NBRC 100395).